Consider the following 370-residue polypeptide: Putative glutamate--cysteine ligase 2 (370 aa).

It belongs to the glutamate--cysteine ligase type 2 family. YbdK subfamily.

It catalyses the reaction L-cysteine + L-glutamate + ATP = gamma-L-glutamyl-L-cysteine + ADP + phosphate + H(+). In terms of biological role, ATP-dependent carboxylate-amine ligase which exhibits weak glutamate--cysteine ligase activity. In Janthinobacterium sp. (strain Marseille) (Minibacterium massiliensis), this protein is Putative glutamate--cysteine ligase 2.